The chain runs to 128 residues: UPF0102 protein Mext_0406 (128 aa).

This sequence belongs to the UPF0102 family.

This is UPF0102 protein Mext_0406 from Methylorubrum extorquens (strain PA1) (Methylobacterium extorquens).